Consider the following 652-residue polypeptide: Coiled-coil domain-containing protein 81 (652 aa).

Ser-206 is subject to Phosphoserine. Over residues 238–256 (KCKLKDQSDKEEGTRDISS) the composition is skewed to basic and acidic residues. The tract at residues 238-258 (KCKLKDQSDKEEGTRDISSPK) is disordered. Phosphoserine occurs at positions 275, 296, and 417. A coiled-coil region spans residues 436–493 (MDNRQENEIKQRQYRELMDRLEQVQLTEELAAQRAKFLKDKMEETQCYKRALDAQIKN).

The protein resides in the cytoplasm. The protein localises to the cytoskeleton. It localises to the microtubule organizing center. It is found in the centrosome. This is Coiled-coil domain-containing protein 81 (CCDC81) from Homo sapiens (Human).